A 344-amino-acid chain; its full sequence is GTPase Obg (344 aa).

The 159-residue stretch at 1–159 (MKFLDEAKVY…MWLILRLKLI (159 aa)) folds into the Obg domain. The region spanning 160–327 (ADAGLVGLPN…ALRAIQAQLD (168 aa)) is the OBG-type G domain. GTP is bound by residues 166-173 (GLPNAGKS), 191-195 (FTTLH), 212-215 (DIPG), 279-282 (SKAD), and 308-310 (SAA). Residues S173 and T193 each coordinate Mg(2+).

The protein belongs to the TRAFAC class OBG-HflX-like GTPase superfamily. OBG GTPase family. As to quaternary structure, monomer. Requires Mg(2+) as cofactor.

It is found in the cytoplasm. An essential GTPase which binds GTP, GDP and possibly (p)ppGpp with moderate affinity, with high nucleotide exchange rates and a fairly low GTP hydrolysis rate. Plays a role in control of the cell cycle, stress response, ribosome biogenesis and in those bacteria that undergo differentiation, in morphogenesis control. The polypeptide is GTPase Obg (Methylorubrum extorquens (strain CM4 / NCIMB 13688) (Methylobacterium extorquens)).